A 123-amino-acid chain; its full sequence is MNLIQQLEQEEIARLGKTIPEFAPGDTVVVQVKVKEGNRERLQAFEGVVIAKRNRGLNSSFIVRKISSGEGVERTFQAYSPLVASIEVKRRGDVRRAKLYYLRERSGKSARIKEKLVRKVKAA.

The protein belongs to the bacterial ribosomal protein bL19 family.

This protein is located at the 30S-50S ribosomal subunit interface and may play a role in the structure and function of the aminoacyl-tRNA binding site. The protein is Large ribosomal subunit protein bL19 of Laribacter hongkongensis (strain HLHK9).